The sequence spans 270 residues: MRPFDLIRFKQSGRPITMLTAWDCLSAALVEAAGADVVLVGDSLGMVALGHATTLPVTLDQMLHHTLAVARGFTASHDQQPLLVCDLPFLSYQCGPDLAVAAAGKLLKESSAAAVKLEGADPEIVAVVDRLVRMGIPVMGHLGLTPQAVHRLGYRRQALDPVSQDRLIEQALTLEKTGCFALVLEHVPSELAARARHELGIPVIGIGAGDDCDGQVRVTADLLGLTPHQPPFSPPQLNGRQLCIEALRGWIQEHQSSSPTTAPPQAEPDC.

The Mg(2+) site is built by aspartate 42 and aspartate 86. Residues 42–43 (DS), aspartate 86, and lysine 116 contribute to the 3-methyl-2-oxobutanoate site. Glutamate 118 provides a ligand contact to Mg(2+). The active-site Proton acceptor is glutamate 185.

It belongs to the PanB family. Homodecamer; pentamer of dimers. Requires Mg(2+) as cofactor.

Its subcellular location is the cytoplasm. It carries out the reaction 3-methyl-2-oxobutanoate + (6R)-5,10-methylene-5,6,7,8-tetrahydrofolate + H2O = 2-dehydropantoate + (6S)-5,6,7,8-tetrahydrofolate. The protein operates within cofactor biosynthesis; (R)-pantothenate biosynthesis; (R)-pantoate from 3-methyl-2-oxobutanoate: step 1/2. Catalyzes the reversible reaction in which hydroxymethyl group from 5,10-methylenetetrahydrofolate is transferred onto alpha-ketoisovalerate to form ketopantoate. This Synechococcus sp. (strain CC9902) protein is 3-methyl-2-oxobutanoate hydroxymethyltransferase.